The primary structure comprises 436 residues: Prenyltransferase nscD (436 aa).

It belongs to the tryptophan dimethylallyltransferase family.

Its pathway is secondary metabolite biosynthesis. Its function is as follows. Prenyltransferase; part of the gene cluster that mediates the biosynthesis of neosartoricin B, a prenylated anthracenone that probably exhibits T-cell antiproliferative activity, suggestive of a physiological role as an immunosuppressive agent. The non-reducing polyketide synthase nscA probably synthesizes and cyclizes the decaketide backbone. The hydrolase nscB then mediates the product release through hydrolysis followed by spontaneous decarboxylation. The prenyltransferase nscD catalyzes the addition of the dimethylallyl group to the aromatic C5. The FAD-dependent monooxygenase nscC is then responsible for the stereospecific hydroxylation at C2. Neosartoricin B can be converted into two additional compounds neosartoricins C and D. Neosartoricin C is a spirocyclic compound that is cyclized through the attack of C3 hydroxyl on C14, followed by dehydration. On the other hand, neosartoricin D is a further cyclized compound in which attack of C2 on C14 in neosartoricin C results in the formation of the acetal-containing dioxabicyclo-octanone ring. Both of these compounds are novel and possibly represent related metabolites of the gene cluster. The polypeptide is Prenyltransferase nscD (Arthroderma otae (strain ATCC MYA-4605 / CBS 113480) (Microsporum canis)).